Reading from the N-terminus, the 185-residue chain is Ribosome-recycling factor (185 aa).

The protein belongs to the RRF family.

The protein localises to the cytoplasm. Functionally, responsible for the release of ribosomes from messenger RNA at the termination of protein biosynthesis. May increase the efficiency of translation by recycling ribosomes from one round of translation to another. The protein is Ribosome-recycling factor of Salinispora tropica (strain ATCC BAA-916 / DSM 44818 / JCM 13857 / NBRC 105044 / CNB-440).